The primary structure comprises 458 residues: ATP synthase subunit beta (458 aa).

Gly148–Thr155 contacts ATP.

It belongs to the ATPase alpha/beta chains family. F-type ATPases have 2 components, CF(1) - the catalytic core - and CF(0) - the membrane proton channel. CF(1) has five subunits: alpha(3), beta(3), gamma(1), delta(1), epsilon(1). CF(0) has three main subunits: a(1), b(2) and c(9-12). The alpha and beta chains form an alternating ring which encloses part of the gamma chain. CF(1) is attached to CF(0) by a central stalk formed by the gamma and epsilon chains, while a peripheral stalk is formed by the delta and b chains.

Its subcellular location is the cell inner membrane. The catalysed reaction is ATP + H2O + 4 H(+)(in) = ADP + phosphate + 5 H(+)(out). Its function is as follows. Produces ATP from ADP in the presence of a proton gradient across the membrane. The catalytic sites are hosted primarily by the beta subunits. This Pseudomonas putida (strain ATCC 700007 / DSM 6899 / JCM 31910 / BCRC 17059 / LMG 24140 / F1) protein is ATP synthase subunit beta.